The sequence spans 997 residues: Autophagy-related protein 9 (997 aa).

At 1 to 318 (MERDEYQLPN…DVYNYYLGNG (318 aa)) the chain is on the cytoplasmic side. Serine 19 carries the phosphoserine modification. The segment covering 29 to 39 (VNPSLNSQEMS) has biased composition (polar residues). The tract at residues 29 to 88 (VNPSLNSQEMSNFPLPDIERGSSLLHSTNDSREDVDENDLRVPESDQGTSTEEEDEVDEE) is disordered. Acidic residues predominate over residues 79–88 (TEEEDEVDEE). Glycyl lysine isopeptide (Lys-Gly) (interchain with G-Cter in ubiquitin) cross-links involve residues lysine 113 and lysine 121. A Phosphoserine modification is found at serine 122. Disordered regions lie at residues 127 to 159 (LVEGSTDDSVPKVGQLSSEEEEDNEFINNDGFD) and 214 to 234 (HHDKDKSANNGPRNINGNQKH). A Glycyl lysine isopeptide (Lys-Gly) (interchain with G-Cter in ubiquitin) cross-link involves residue lysine 138. Residues serine 143 and serine 144 each carry the phosphoserine modification. Residues 144-159 (SEEEEDNEFINNDGFD) are compositionally biased toward acidic residues. Positions 221-233 (ANNGPRNINGNQK) are enriched in polar residues. A helical transmembrane segment spans residues 319 to 339 (FYCIILEKILNICTLLFVVFV). Residues 340–376 (STYMGHCVDYSKLPTSHRVSDIIIDKCYSNSITGFTK) are Lumenal-facing. A helical transmembrane segment spans residues 377-397 (FFLWMFYFFVILKIVQLYFDV). The Cytoplasmic portion of the chain corresponds to 398–538 (QKLSELQNFY…EELQKRFMLA (141 aa)). The stretch at 539 to 559 (GFLNIILAPFLVTYFVLLYFF) is an intramembrane region. Residues 560 to 620 (RYFNEYKTSP…DQFPKEKTNL (61 aa)) lie on the Cytoplasmic side of the membrane. A helical transmembrane segment spans residues 621–641 (FLKFVSFICGSFVAILAFLTV). Residues 642 to 656 (FDPENFLNFEITSDR) are Lumenal-facing. Serine 657 is subject to Phosphoserine. The helical transmembrane segment at 657–677 (SVIFYITILGAIWSVSRNTIT) threads the bilayer. Topologically, residues 678–723 (QEYHVFDPEETLKELYEYTHYLPKEWEGRYHKEEIKLEFCKLYNLR) are cytoplasmic. Lysine 701 is covalently cross-linked (Glycyl lysine isopeptide (Lys-Gly) (interchain with G-Cter in ubiquitin)). Residues 724-744 (IVILLRELTSLMITPFVLWFS) lie within the membrane without spanning it. The Cytoplasmic portion of the chain corresponds to 745–997 (LPSSAGRIVD…EYYKKSDVGR (253 aa)). Residues serine 787 and serine 792 each carry the phosphoserine modification. Residue threonine 794 is modified to Phosphothreonine. Serine 802 is modified (phosphoserine). Threonine 804 is modified (phosphothreonine). Phosphoserine occurs at positions 831, 842, 864, 948, and 969.

This sequence belongs to the ATG9 family. As to quaternary structure, homotrimer; forms a homotrimer with a central pore that forms a path between the two membrane leaflets. Interacts with ATG23 and ATG27 to form a cycling complex for trafficking to the PAS. Interacts (via N-terminus) with ATG11, required for recruitment of ATG9 to the PAS for the Cvt pathway during nutrient-rich conditions. Interacts (via N-terminus) with ATG17; required for recruitment to the PAS during autophagy and starved conditions. Interacts with ATG2 and ATG18; required for the retrieval of ATG9 from the PAS to the cytoplasmic pool. Interacts with ATG41. Interacts with the conserved oligomeric Golgi (COG) complex subunits COG3 and COG4. Interacts with TRS85. In terms of processing, phosphorylated by ATG1; phosphorylation is required for autophagy and cytoplasm to vacuole transport (Cvt) vesicle formation. Phosphorylation by ATG1 regulates ATG18 interaction and preautophagosome elongation. Phosphorylation at Ser-122 is required for selective autophagy by regulating anterograde trafficking and interaction with ATG23 and ATG27. Phosphorylation at Ser-122 prevents ubiquitination by the SCF(MET30) complex. Ubiquitinated by the SCF(MET30) complex in normal conditions, leading to its degradation by the proteasome, thereby preventing inappropriate induction of autophagy. Ubiquitination by the SCF(MET30) complex is prevented by phosphorylation at Ser-122.

The protein localises to the preautophagosomal structure membrane. Its subcellular location is the cytoplasmic vesicle membrane. The protein resides in the golgi apparatus membrane. It is found in the endoplasmic reticulum membrane. It localises to the mitochondrion membrane. The enzyme catalyses a 1,2-diacyl-sn-glycero-3-phosphocholine(in) = a 1,2-diacyl-sn-glycero-3-phosphocholine(out). The catalysed reaction is a 1,2-diacyl-sn-glycero-3-phospho-L-serine(in) = a 1,2-diacyl-sn-glycero-3-phospho-L-serine(out). It catalyses the reaction a 1,2-diacyl-sn-glycero-3-phosphoethanolamine(in) = a 1,2-diacyl-sn-glycero-3-phosphoethanolamine(out). It carries out the reaction a 1,2-diacyl-sn-glycero-3-phospho-(1D-myo-inositol-3-phosphate)(in) = a 1,2-diacyl-sn-glycero-3-phospho-(1D-myo-inositol-3-phosphate)(out). Phospholipid scramblase involved in autophagy and cytoplasm to vacuole transport (Cvt) vesicle formation. Cycles between the preautophagosomal structure/phagophore assembly site (PAS) and the cytoplasmic vesicle pool and supplies membrane for the growing autophagosome. Lipid scramblase activity plays a key role in preautophagosomal structure/phagophore assembly by distributing the phospholipids that arrive through ATG2 from the cytoplasmic to the luminal leaflet of the bilayer, thereby driving autophagosomal membrane expansion. Required for mitophagy. Also involved in endoplasmic reticulum-specific autophagic process and is essential for the survival of cells subjected to severe ER stress. Different machineries are required for anterograde trafficking to the PAS during either the Cvt pathway or bulk autophagy and for retrograde trafficking. Recruits vesicle-tethering proteins TRS85 and YPT1 to the autophagosome formation site. Also recruits ATG23 and ATG8 to the PAS. The protein is Autophagy-related protein 9 of Saccharomyces cerevisiae (strain YJM789) (Baker's yeast).